A 197-amino-acid chain; its full sequence is Cyclin-dependent kinase inhibitor 1B (197 aa).

Residues 1–11 show a composition bias toward polar residues; it reads MSNVRVSNGSP. A disordered region spans residues 1 to 34; the sequence is MSNVRVSNGSPSLERMDARQAEHPKPSACRNLFG. Serine 10 bears the Phosphoserine; by UHMK1 mark. Basic and acidic residues predominate over residues 14-25; the sequence is ERMDARQAEHPK. The interaction with CDK2 stretch occupies residues 51–91; that stretch reads DMEEASQRKWNFDFQNHKPLEGRYEWQEVERGSLPEFYYRP. At tyrosine 74 the chain carries Phosphotyrosine; by SRC. A disordered region spans residues 86–197; it reads EFYYRPPRPP…PKKPGLRRQT (112 aa). Tyrosine 88 carries the phosphotyrosine; by ABL, LYN, SRC and JAK2 modification. Residue tyrosine 89 is modified to Phosphotyrosine. Positions 104 to 113 are enriched in polar residues; it reads QESQDVSGSR. The short motif at 153–169 is the Nuclear localization signal element; the sequence is KRPAAEDSSSQNKRANR. Threonine 170 is subject to Phosphothreonine; by CaMK1. Positions 175 to 186 are enriched in polar residues; that stretch reads SDGSPNAGTVEQ. The residue at position 187 (threonine 187) is a Phosphothreonine; by PKB/AKT1, CDK1 and CDK2. At threonine 197 the chain carries Phosphothreonine; by CaMK1, PKB/AKT1, RPS6KA1, RPS6KA3 and PIM1.

Belongs to the CDI family. In terms of assembly, forms a ternary complex composed of CCNE1, CDK2 and CDKN1B. Interacts directly with CCNE1; the interaction is inhibited by CDK2-dependent phosphorylation on Thr-187. Interacts with COPS5, subunit of the COP9 signalosome complex; the interaction leads to CDKN1B degradation. Interacts with NUP50; the interaction leads to nuclear import and degradation of phosphorylated CDKN1B. Interacts with CCND1 and SNX6. Interacts (Thr-197-phosphorylated form) with 14-3-3 proteins, binds strongly YWHAQ, weakly YWHAE and YWHAH, but not YWHAB nor YWHAZ; the interaction with YWHAQ results in translocation to the cytoplasm. Interacts with AKT1 and LYN; the interactions lead to cytoplasmic mislocation, phosphorylation of CDKN1B and inhibition of cell cycle arrest. Forms a ternary complex with CCNA2 and CDK2; CDKN1B inhibits the kinase activity of CDK2 through conformational rearrangements. Interacts (unphosphorylated form) with CDK2. Forms a complex with CDK2 and SPDYA, but does not directly interact with SPDYA. Forms a ternary complex composed of cyclin D, CDK4 and CDKN1B. Interacts (phosphorylated on Tyr-88 and Tyr-89) with CDK4; the interaction is required for cyclin D and CDK4 complex assembly, induces nuclear translocation and activates the CDK4 kinase activity. Interacts with GRB2. Interacts with PIM1. Identified in a complex with SKP1, SKP2 and CKS1B. Interacts with UHMK1; the interaction leads to cytoplasmic mislocation, phosphorylation of CDKN1B and inhibition of cell cycle arrest. Also interacts with CDK1. Dephosphorylated on Thr-187 by PPM1H, leading to CDKN1B stability. In terms of processing, phosphorylated; phosphorylation occurs on serine, threonine and tyrosine residues. Phosphorylation on Ser-10 is the major site of phosphorylation in resting cells, takes place at the G(0)-G(1) phase and leads to protein stability. Phosphorylation on other sites is greatly enhanced by mitogens, growth factors, MYC and in certain cancer cell lines. The phosphorylated form found in the cytoplasm is inactivate. Phosphorylation on Thr-197 is required for interaction with 14-3-3 proteins. Phosphorylation on Thr-187, by CDK1 and CDK2 leads to protein ubiquitination and proteasomal degradation. Tyrosine phosphorylation promotes this process. Phosphorylation by PKB/AKT1 can be suppressed by LY294002, an inhibitor of the catalytic subunit of PI3K. Phosphorylation on Tyr-88 and Tyr-89 has no effect on binding CDK2, but is required for binding CDK4. Dephosphorylated on tyrosine residues by G-CSF. Dephosphorylated on Thr-187 by PPM1H, leading to CDKN1B stability. Post-translationally, ubiquitinated; in the cytoplasm by the KPC complex (composed of RNF123/KPC1 and UBAC1/KPC2) and, in the nucleus, by SCF(SKP2). The latter requires prior phosphorylation on Thr-187. Ubiquitinated; by a TRIM21-containing SCF(SKP2)-like complex; leads to its degradation. Subject to degradation in the lysosome. Interaction with SNX6 promotes lysosomal degradation.

It is found in the nucleus. The protein resides in the cytoplasm. The protein localises to the endosome. Functionally, important regulator of cell cycle progression. Inhibits the kinase activity of CDK2 bound to cyclin A, but has little inhibitory activity on CDK2 bound to SPDYA. Involved in G1 arrest. Potent inhibitor of cyclin E- and cyclin A-CDK2 complexes. Forms a complex with cyclin type D-CDK4 complexes and is involved in the assembly, stability, and modulation of CCND1-CDK4 complex activation. Acts either as an inhibitor or an activator of cyclin type D-CDK4 complexes depending on its phosphorylation state and/or stoichometry. The protein is Cyclin-dependent kinase inhibitor 1B (Cdkn1b) of Mus musculus (Mouse).